Here is a 402-residue protein sequence, read N- to C-terminus: uncharacterized protein (402 aa).

At 1-12 (MFQQLSASIRHN) the chain is on the cytoplasmic side. The chain crosses the membrane as a helical span at residues 13–33 (AHIIFLCISWYFISSLASQVT). Over 34–50 (KQVLTVCPLPLFLGEFQ) the chain is Extracellular. Residues 51–71 (FIYTAVLAWFTCYIAYSFPGF) traverse the membrane as a helical segment. At 72–103 (YRIFPNGTFPEYYIDDRETSRAARKESKLSSL) the chain is on the cytoplasmic side. The helical transmembrane segment at 104 to 124 (IIPPSKPILQTVLPLGLFQFV) threads the bilayer. Topologically, residues 125–134 (GKYFGHTATS) are extracellular. The chain crosses the membrane as a helical span at residues 135–155 (LVPVSTVASIKTLSPMFILLL). Over 156–165 (QKILKISTLK) the chain is Cytoplasmic. The chain crosses the membrane as a helical span at residues 166–186 (ITLTLIFSLCTLVLGVWIIVQ). The Extracellular portion of the chain corresponds to 187–206 (EDNRSPASSNELREFSKYGV). Residues 207–227 (ICAMISMFIFVLQNIYGKTVF) form a helical membrane-spanning segment. The Cytoplasmic segment spans residues 228 to 271 (TYRSQTDESQSNSGFSRQESPLPLYEKLDEKLVAKKKPKSYDKL). A helical membrane pass occupies residues 272–292 (TLMIYISLVGFCLSFGWFITL). At 293–353 (EFPVLFRYFF…TYSIANLMKR (61 aa)) the chain is on the extracellular side. The chain crosses the membrane as a helical span at residues 354–374 (FAIIAVSWVFIGRRITWLQVF). Residues 375-402 (GLVLNTLGLFLYERCTSQSKIKAKIRPE) lie on the Cytoplasmic side of the membrane.

The protein belongs to the TPT transporter family.

Its subcellular location is the membrane. This is an uncharacterized protein from Saccharomyces cerevisiae (strain ATCC 204508 / S288c) (Baker's yeast).